A 714-amino-acid polypeptide reads, in one-letter code: Hormonally up-regulated neu tumor-associated kinase (714 aa).

A compositionally biased stretch (low complexity) spans 1–15 (MPAAAGDGLLGEPAA). A disordered region spans residues 1–26 (MPAAAGDGLLGEPAAPGGGGGAEDAA). The 259-residue stretch at 62 to 320 (LIGSRKLGEG…IQQALANRWL (259 aa)) folds into the Protein kinase domain. Residues 68–76 (LGEGSFAKV) and Lys91 contribute to the ATP site. Asp186 (proton acceptor) is an active-site residue. The span at 437-461 (KKPKEQEKRGDFLHRPFSKKLDKNL) shows a compositional bias: basic and acidic residues. 3 disordered regions span residues 437-471 (KKPK…SGSL), 518-552 (MEFI…HKED), and 590-615 (ARRN…HTPL). The span at 599-611 (LSPGLPSGSMSPL) shows a compositional bias: low complexity.

It belongs to the protein kinase superfamily. CAMK Ser/Thr protein kinase family. SNF1 subfamily.

The enzyme catalyses L-seryl-[protein] + ATP = O-phospho-L-seryl-[protein] + ADP + H(+). It catalyses the reaction L-threonyl-[protein] + ATP = O-phospho-L-threonyl-[protein] + ADP + H(+). This Homo sapiens (Human) protein is Hormonally up-regulated neu tumor-associated kinase (HUNK).